An 86-amino-acid polypeptide reads, in one-letter code: U13-theraphotoxin-Cg1b (86 aa).

The signal sequence occupies residues 1-21 (MKVSVLITLAVLGVMFVWASA). The propeptide occupies 22-51 (AELEQSGSDQKDSPAWLKSMERIFQSEERE). 3 disulfides stabilise this stretch: Cys-52–Cys-66, Cys-59–Cys-71, and Cys-65–Cys-78.

Belongs to the neurotoxin 10 (Hwtx-1) family. 41 (Jztx-36) subfamily. As to expression, expressed by the venom gland.

Its subcellular location is the secreted. In terms of biological role, probable ion channel inhibitor. This is U13-theraphotoxin-Cg1b from Chilobrachys guangxiensis (Chinese earth tiger tarantula).